A 901-amino-acid chain; its full sequence is Disease resistance RPP8-like protein 3 (901 aa).

Residues 15-56 (ALLNRESERLNGIDEQVDGLKRQLRGLQSLLKDADAKKHGSD) adopt a coiled-coil conformation. One can recognise an NB-ARC domain in the interval 144 to 453 (LQDIQREIRQ…AEGIYDGLTI (310 aa)). ATP is bound by residues 190–197 (GMGGIGKT) and 385–392 (GAQIVGKS). 3 LRR repeats span residues 567–591 (LPLL…SIGG), 592–615 (LIHL…IRNL), and 833–858 (MPCL…KYVT).

This sequence belongs to the disease resistance NB-LRR family. RPP8/HRT subfamily.

Functionally, disease resistance protein. The polypeptide is Disease resistance RPP8-like protein 3 (RPP8L3) (Arabidopsis thaliana (Mouse-ear cress)).